Consider the following 431-residue polypeptide: 3-phosphoshikimate 1-carboxyvinyltransferase (431 aa).

Residues Lys22, Ser23, and Arg27 each coordinate 3-phosphoshikimate. Position 22 (Lys22) interacts with phosphoenolpyruvate. Phosphoenolpyruvate contacts are provided by Gly94 and Arg122. Residues Ser167, Gln169, Asp314, and Lys341 each coordinate 3-phosphoshikimate. Residue Gln169 participates in phosphoenolpyruvate binding. Residue Asp314 is the Proton acceptor of the active site. Residues Arg345 and Arg391 each contribute to the phosphoenolpyruvate site.

It belongs to the EPSP synthase family. Monomer.

The protein resides in the cytoplasm. The enzyme catalyses 3-phosphoshikimate + phosphoenolpyruvate = 5-O-(1-carboxyvinyl)-3-phosphoshikimate + phosphate. It participates in metabolic intermediate biosynthesis; chorismate biosynthesis; chorismate from D-erythrose 4-phosphate and phosphoenolpyruvate: step 6/7. In terms of biological role, catalyzes the transfer of the enolpyruvyl moiety of phosphoenolpyruvate (PEP) to the 5-hydroxyl of shikimate-3-phosphate (S3P) to produce enolpyruvyl shikimate-3-phosphate and inorganic phosphate. This is 3-phosphoshikimate 1-carboxyvinyltransferase from Leuconostoc citreum (strain KM20).